A 519-amino-acid chain; its full sequence is Laccase-2 (519 aa).

Residues 1–20 form the signal peptide; that stretch reads MGLQRFSFFVTLALVARSLA. Plastocyanin-like domains are found at residues 22 to 147 and 159 to 301; these read IGPV…FVVY and VDNE…ILRY. Asn-74 carries N-linked (GlcNAc...) asparagine glycosylation. Cu cation is bound by residues His-84, His-86, His-129, and His-131. Disulfide bonds link Cys-105–Cys-508 and Cys-137–Cys-225. Residues Asn-161, Asn-228, Asn-237, Asn-271, Asn-353, and Asn-361 are each glycosylated (N-linked (GlcNAc...) asparagine). One can recognise a Plastocyanin-like 3 domain in the interval 368–490; sequence TVPVLLQILS…AGFAIVFAED (123 aa). Residues His-415, His-418, and His-420 each coordinate Cu cation. An N-linked (GlcNAc...) asparagine glycan is attached at Asn-456. 4 residues coordinate Cu cation: His-472, Cys-473, His-474, and His-478.

This sequence belongs to the multicopper oxidase family. Requires Cu cation as cofactor.

It localises to the secreted. It carries out the reaction 4 hydroquinone + O2 = 4 benzosemiquinone + 2 H2O. In terms of biological role, lignin degradation and detoxification of lignin-derived products. The sequence is that of Laccase-2 (LCC2) from Trametes versicolor (White-rot fungus).